We begin with the raw amino-acid sequence, 967 residues long: MPELNFRAIEEKWQKRWLEAKVFEPNIKDKPKEKKFYITVAFPYLSGHLHVGHARTYTIPDVIARFKRMQGYNVLFPMGWHITGSPIVGIAERIKNRDPHTIWIYRDVYKVPEEILWTFEDPVNIVKYFMKAAKETFIRAGFSVDWSREFYTTSLFPPFSKFIEWQFLKLKEKGYIVKGAHRVRWDPVVGTPLGDHDLMEGEDVPILEYVIIKFELKEGDETIYLPAATLRPETVYGVTNMWINPNATYVKAKVKRGGKEETWIISKEAAYKLSFQDREIEVIEEFKGEKLIGKYVRNPVTGDEVIILPAEFVDPDNATGVVMSVPAHAPFDHVALEDLKRESEILVKYDIDPRIVEEITYISLIKLEGYGEFPAVEEVQKLGIKSQKDREKLEQATKTIYKAEYHKGIFKVPPYDGKPVQEVKELIAKEMMEKGIAEIMYEFAEKNVISRFGNRAVIKIIHDQWFIDYGNSEWKEKARKALARMKIYPETRRAQFEAIIDWLDKKACARKVGLGTPLPWDPEWVIESLSDSTIYMAYYTISRHINRLREEGRLDPEKLTPEFFDYIFLEEFSEEREKELEKKTGIPAEIIHEMKEEFEYWYPLDWRCSGKDLIPNHLTFFIFNHVAIFREEHWPKGIAVNGFGTLEGQKMSKSKGNVLNFIDAIEENGADVVRLYIMSLAEHDSDFDWRRKEVGKLRRQLERFYELISQFAEYEAKENVELKTIDKWLLHRLNKAIEGTTKALEEFRTRTAVQWAFYSIMNDLRWYMRRTEGRDDEAKRFVLRKLADIWVRLMAPFTPHICEELWEKLGGEGFVSLAKWPEPVDEWWNEEVEVEEDFIKSLIEDIKEIIEVAKIESPKRAYIYTAPEWKWKVYEVVAEKREFKSAMAELMKDEEIRKHGKEVAKLVQAIIKERAFDVKRIDEEKVLRESKDFLEKELGLEVIINPEEDKGGKKRQAIPLKPAVFIE.

The short motif at 43–53 is the 'HIGH' region element; it reads PYLSGHLHVGH. The short motif at 650 to 654 is the 'KMSKS' region element; it reads KMSKS. Position 653 (K653) interacts with ATP.

Belongs to the class-I aminoacyl-tRNA synthetase family.

The protein localises to the cytoplasm. It carries out the reaction tRNA(Leu) + L-leucine + ATP = L-leucyl-tRNA(Leu) + AMP + diphosphate. The chain is Leucine--tRNA ligase from Pyrococcus abyssi (strain GE5 / Orsay).